The sequence spans 312 residues: tRNA dimethylallyltransferase (312 aa).

Residue 10–17 (GPTASGKS) participates in ATP binding. Residue 12-17 (TASGKS) coordinates substrate. Positions 35–38 (DSKQ) are interaction with substrate tRNA.

The protein belongs to the IPP transferase family. As to quaternary structure, monomer. Mg(2+) serves as cofactor.

The enzyme catalyses adenosine(37) in tRNA + dimethylallyl diphosphate = N(6)-dimethylallyladenosine(37) in tRNA + diphosphate. Its function is as follows. Catalyzes the transfer of a dimethylallyl group onto the adenine at position 37 in tRNAs that read codons beginning with uridine, leading to the formation of N6-(dimethylallyl)adenosine (i(6)A). The polypeptide is tRNA dimethylallyltransferase (Anaplasma phagocytophilum (strain HZ)).